Reading from the N-terminus, the 340-residue chain is MPIFPKPKVTVILANLGTPDVPTASAVRAFLKQFLSDQRVIEIPKLLWKIILYSFVLPFRPKRVAHAYASVWGQDSPMREILFAQTDALKRQLISHYPQLDLNIVPAMTYGNPGVQHILKDLAASPQEHVILLPLFPQYSATSTAPLYDAFANWIPKQRHLPGLTIIKDYYRHPVFIQALVSSVQRFQQQHGKPQKLLMSFHGIPQPYADKGDPYADRCRETARLVAKQLGLTPDDWAISFQSRFGKQEWVKPYTDELLTTWAANGIKSVQILSPAFSADCLETLEELEIQNAELFLEAGGTSYQYIPALNTSVEHLELLRQLLQAHLDALNYSLAYSAH.

Residues H202 and E283 each coordinate Fe cation.

It belongs to the ferrochelatase family.

The protein localises to the cytoplasm. It carries out the reaction heme b + 2 H(+) = protoporphyrin IX + Fe(2+). It participates in porphyrin-containing compound metabolism; protoheme biosynthesis; protoheme from protoporphyrin-IX: step 1/1. Its function is as follows. Catalyzes the ferrous insertion into protoporphyrin IX. This chain is Ferrochelatase, found in Acinetobacter baylyi (strain ATCC 33305 / BD413 / ADP1).